The following is a 204-amino-acid chain: Somatotropin (204 aa).

The signal sequence occupies residues 1 to 17 (MDRVVLMLSVLSLGVSS). The residue at position 18 (Gln-18) is a Pyrrolidone carboxylic acid. Zn(2+) is bound at residue His-36. A disulfide bridge connects residues Cys-69 and Cys-177. Position 186 (Glu-186) interacts with Zn(2+). Residues Cys-194 and Cys-202 are joined by a disulfide bond.

It belongs to the somatotropin/prolactin family.

The protein resides in the secreted. Its function is as follows. Growth hormone plays an important role in growth control and is involved in the regulation of several anabolic processes. Implicated as an osmoregulatory substance important for seawater adaptation. The chain is Somatotropin (gh) from Acanthopagrus latus (Yellowfin seabream).